Reading from the N-terminus, the 123-residue chain is Small ribosomal subunit protein uS13 (123 aa).

Residues 97 to 123 (PVRGQKTKTNARTRKGPKKTVGRKKKK) are disordered. A compositionally biased stretch (basic residues) spans 101–123 (QKTKTNARTRKGPKKTVGRKKKK).

Belongs to the universal ribosomal protein uS13 family. In terms of assembly, part of the 30S ribosomal subunit. Forms a loose heterodimer with protein S19. Forms two bridges to the 50S subunit in the 70S ribosome.

Located at the top of the head of the 30S subunit, it contacts several helices of the 16S rRNA. In the 70S ribosome it contacts the 23S rRNA (bridge B1a) and protein L5 of the 50S subunit (bridge B1b), connecting the 2 subunits; these bridges are implicated in subunit movement. Contacts the tRNAs in the A and P-sites. The polypeptide is Small ribosomal subunit protein uS13 (Alkaliphilus oremlandii (strain OhILAs) (Clostridium oremlandii (strain OhILAs))).